Here is a 227-residue protein sequence, read N- to C-terminus: 2,3-bisphosphoglycerate-dependent phosphoglycerate mutase (227 aa).

Substrate-binding positions include 8 to 15, 21 to 22, Arg-58, 110 to 113, Lys-121, 137 to 138, and 181 to 182; these read RHGKSVWN, TG, ERMY, RR, and GN. Catalysis depends on His-9, which acts as the Tele-phosphohistidine intermediate. Glu-110 functions as the Proton donor/acceptor in the catalytic mechanism.

Belongs to the phosphoglycerate mutase family. BPG-dependent PGAM subfamily.

It catalyses the reaction (2R)-2-phosphoglycerate = (2R)-3-phosphoglycerate. Its pathway is carbohydrate degradation; glycolysis; pyruvate from D-glyceraldehyde 3-phosphate: step 3/5. In terms of biological role, catalyzes the interconversion of 2-phosphoglycerate and 3-phosphoglycerate. The chain is 2,3-bisphosphoglycerate-dependent phosphoglycerate mutase from Chlamydia felis (strain Fe/C-56) (Chlamydophila felis).